A 549-amino-acid polypeptide reads, in one-letter code: Cation/acetate symporter ActP (549 aa).

The next 13 helical transmembrane spans lie at 33–53 (WQAIIMFLIFVVFTLGITYWA), 77–97 (LAIAGDYMSAASFLGISALVF), 103–123 (GLIYSLGFLVGWPIILFLIAE), 148–168 (ILSACGSLVVVALYLIAQMVG), 183–203 (IAVVLVGVLMMMYVLFGGMLA), 206–226 (WVQIIKAVLLLFGASFMAFMV), 262–282 (ISALSLGLGLMFGTAGLPHIL), 303–323 (GFMGYFYILTFIIGFGAIMLV), 355–375 (LFLGFISAVAFATILAVVAGL), 404–424 (VSKITVLILGVIAIILGMLFE), 428–448 (IAFMVGLAFAIAASCNFPIIL), 464–484 (GGWLGLITAVVLMILGPTIWV), and 493–513 (IFPYEYPALFSISVAFLGIWF).

It belongs to the sodium:solute symporter (SSF) (TC 2.A.21) family.

Its subcellular location is the cell inner membrane. In terms of biological role, transports acetate. The chain is Cation/acetate symporter ActP from Shigella boydii serotype 4 (strain Sb227).